The primary structure comprises 331 residues: Serine racemase (331 aa).

Positions 34 and 54 each coordinate ATP. Lys59 (proton acceptor) is an active-site residue. N6-(pyridoxal phosphate)lysine is present on Lys59. Residue Thr81 participates in Ca(2+) binding. Catalysis depends on Ser84, which acts as the Proton acceptor. Asn86 contacts pyridoxal 5'-phosphate. An ATP-binding site is contributed by Tyr121. Asp178 provides a ligand contact to Mg(2+). Residues Gly186, Gly187, and Gly188 each contribute to the pyridoxal 5'-phosphate site. Glu210, Ala214, and Asp216 together coordinate Ca(2+). Mg(2+) contacts are provided by Glu210, Ala214, and Asp216. Mn(2+)-binding residues include Glu210, Ala214, and Asp216. Residue Lys278 participates in ATP binding. Pyridoxal 5'-phosphate is bound at residue Ser314. Residue Asn317 coordinates ATP.

It belongs to the serine/threonine dehydratase family. Homodimer. Mg(2+) is required as a cofactor. Mn(2+) serves as cofactor. Requires Ca(2+) as cofactor. The cofactor is pyridoxal 5'-phosphate. Expressed in the whole plant.

The enzyme catalyses L-serine = D-serine. The catalysed reaction is L-serine = pyruvate + NH4(+). It carries out the reaction D-serine = pyruvate + NH4(+). Its activity is regulated as follows. Inhibited by hydroxylamine. Racemase activity is enhanced by Ca(2+), Mg(2+), Mn(2+), and is decreased by Ni(2+), Zn(2+). Hydratase activity is enhanced by Ca(2+), Mg(2+), Mn(2+), Cu(2+), Fe(2+), Ni(2+). Functionally, catalyzes the synthesis of D-serine from L-serine. Has dehydratase activity towards both L-serine and D-serine. Displays high substrate specificity for L-serine, whereas L-alanine, L-arginine, and L-glutamine were poor substrates. In Arabidopsis thaliana (Mouse-ear cress), this protein is Serine racemase (SR).